Here is a 279-residue protein sequence, read N- to C-terminus: Serine protease 29 (279 aa).

The signal sequence occupies residues 1 to 17; that stretch reads MLIQLCLTLFFLGCSIA. The 246-residue stretch at 31 to 276 folds into the Peptidase S1 domain; that stretch reads IVGGHSAPQG…FLPWITQQMQ (246 aa). A disulfide bridge links C62 with C78. Catalysis depends on charge relay system residues H77 and D124. Disulfide bonds link C158-C234, C191-C215, and C224-C252. The N-linked (GlcNAc...) asparagine glycan is linked to N197. Residue S228 is the Charge relay system of the active site. N-linked (GlcNAc...) asparagine glycosylation occurs at N235.

This sequence belongs to the peptidase S1 family. In terms of assembly, homooligomer, heterodimer and heterotetramer. Able to form homo- and hetero- tetrameric structures. Heterotetramer is far more stable than the homotetramer. As to expression, expressed in embryos and placenta. Found in uterus especially in glandular epithelium during zona lysis and implantation.

The protein localises to the secreted. Involved in embryo hatching and implantation. In Mus musculus (Mouse), this protein is Serine protease 29 (Prss29).